We begin with the raw amino-acid sequence, 513 residues long: Pleiotropic regulator 1 (513 aa).

Residue M1 is modified to N-acetylmethionine. A phosphoserine mark is found at S119 and S200. WD repeat units follow at residues 201–240 (GHLGWVRCIAVEPGNQWFVTGSADRTIKIWDLASGKLKLS), 243–282 (GHISTVRGVIVSTRSPYLFSCGEDKQVKCWDLEYNKVIRH), 285–324 (GHLSAVYGLDLHPTIDVLVTCSRDSTARIWDVRTKASVHT), 327–366 (GHTNAVATVRCQAAEPQIITGSHDTTIRLWDLVAGKTRVT), 369–409 (NHKK…QNLS), 410–448 (GHNAIINTLTVNSDGVLVSGADNGTMHLWDWRTGYNFQR), and 459–498 (DSESGIFACAFDQSESRLLTAEADKTIKVYKEDDTATEET). A Phosphoserine modification is found at S390.

The protein belongs to the WD repeat PRL1/PRL2 family. In terms of assembly, identified in the spliceosome C complex. Component of the PRP19-CDC5L splicing complex composed of a core complex comprising a homotetramer of PRPF19, CDC5L, PLRG1 and BCAS2, and at least three less stably associated proteins CTNNBL1, CWC15 and HSPA8. Interacts (via its WD40 repeat domain) directly with CDC5L (via its C-terminal); the interaction is required for mRNA splicing but not for spliceosome assembly. Component of the minor spliceosome, which splices U12-type introns. Within this complex, interacts with CRIPT. Also interacts directly in the complex with BCAS2 and PRPF19. Interacts with USB1.

The protein localises to the nucleus. It is found in the nucleus speckle. In terms of biological role, involved in pre-mRNA splicing as component of the spliceosome. Component of the PRP19-CDC5L complex that forms an integral part of the spliceosome and is required for activating pre-mRNA splicing. As a component of the minor spliceosome, involved in the splicing of U12-type introns in pre-mRNAs. This Bos taurus (Bovine) protein is Pleiotropic regulator 1 (PLRG1).